A 710-amino-acid polypeptide reads, in one-letter code: Interleukin-1 receptor-associated kinase 1 (710 aa).

Residues 27-106 enclose the Death domain; the sequence is MCRFYKVMDA…DIITAWHPPA (80 aa). Thr66 carries the phosphothreonine; by PKC/PRKCI modification. Positions 107-133 are disordered; it reads PVVPPSTAAPRPSSISAGSEAGDWSPR. The interval 110–211 is proST region; that stretch reads PPSTAAPRPS…FCEISQGTCN (102 aa). Residues 111–123 are compositionally biased toward low complexity; that stretch reads PSTAAPRPSSISA. Ser131 carries the phosphoserine modification. Residues Lys134 and Lys180 each participate in a glycyl lysine isopeptide (Lys-Gly) (interchain with G-Cter in ubiquitin) cross-link. The tract at residues 169–190 is disordered; sequence PPLPSSAPSSTKSSPESPVSGL. The segment covering 174-188 has biased composition (low complexity); the sequence is SAPSSTKSSPESPVS. At Thr209 the chain carries Phosphothreonine; by IRAK4. A Protein kinase domain is found at 212–521; sequence FSEELRIGEG…TQVYKRLEGL (310 aa). Residues 218–226 and Lys239 contribute to the ATP site; that span reads IGEGGFGCV. Residue Asp340 is the Proton acceptor of the active site. Residues 342-345 and Asp358 contribute to the ATP site; that span reads KSSN. Phosphoserine is present on Ser375. Thr387 carries the phosphothreonine modification. 2 disordered regions span residues 527–655 and 689–710; these read WELE…SEPP and FPGL…EFQS. Residues 537-553 show a composition bias toward polar residues; that stretch reads PSPQENSYMSTTGSAQS. Ser553 is subject to Phosphoserine. A compositionally biased stretch (low complexity) spans 567–576; it reads APAQAAQQLQ. Polar residues predominate over residues 616–639; that stretch reads SCTQGGTTRESSVRSSPGFQPTTM. Positions 640-654 are enriched in low complexity; sequence EGSPTGSSSLLSSEP.

The protein belongs to the protein kinase superfamily. TKL Ser/Thr protein kinase family. Pelle subfamily. Homodimer. Forms a complex with TRAF6, PELI1, IRAK4 and MYD88. Direct binding of SMAD6 to PELI1 prevents complex formation and hence negatively regulates IL1R-TLR signaling and eventually NF-kappa-B-mediated gene expression. The TRAF6-PELI1-IRAK4-MYD88 complex recruits MAP3K7/TAK1, TAB1 and TAB2 to mediate NF-kappa-B activation. Interaction with MYD88 recruits IRAK1 to the stimulated receptor complex. Interacts with TOLLIP; this interaction occurs in the cytosol prior to receptor activation. Interacts with IL1RL1. Interacts (when polyubiquitinated) with IKBKG/NEMO. Interacts with RSAD2/viperin. Interacts with IRAK1BP1. Interacts with PELI2. Interacts with ZC3H12A; this interaction increases the interaction between ZC3H12A and IKBKB/IKKB. Interacts with IRAK4. Interacts with PELI3. Interacts with PELI1 and TRAF6. Interacts with INAVA; the interaction takes place upon PRR stimulation. Interacts (via C-terminus) with NFATC4 (via N-terminus). The cofactor is Mg(2+). Following recruitment on the activated receptor complex, phosphorylated on Thr-209, probably by IRAK4, resulting in a conformational change of the kinase domain, allowing further phosphorylations to take place. Thr-387 phosphorylation in the activation loop is required to achieve full enzymatic activity. Post-translationally, polyubiquitinated by TRAF6 after cell stimulation with IL-1-beta by PELI1, PELI2 and PELI3. Polyubiquitination occurs with polyubiquitin chains linked through 'Lys-63'. Ubiquitination promotes interaction with NEMO/IKBKG. Also sumoylated; leading to nuclear translocation. Highly expressed in liver, followed by kidney and skeletal muscle.

Its subcellular location is the cytoplasm. The protein resides in the nucleus. It localises to the lipid droplet. It catalyses the reaction L-seryl-[protein] + ATP = O-phospho-L-seryl-[protein] + ADP + H(+). The enzyme catalyses L-threonyl-[protein] + ATP = O-phospho-L-threonyl-[protein] + ADP + H(+). Its function is as follows. Serine/threonine-protein kinase that plays a critical role in initiating innate immune response against foreign pathogens. Involved in Toll-like receptor (TLR) and IL-1R signaling pathways. Is rapidly recruited by MYD88 to the receptor-signaling complex upon TLR activation. Association with MYD88 leads to IRAK1 phosphorylation by IRAK4 and subsequent autophosphorylation and kinase activation. Phosphorylates E3 ubiquitin ligases Pellino proteins (PELI1, PELI2 and PELI3) to promote pellino-mediated polyubiquitination of IRAK1. Then, the ubiquitin-binding domain of IKBKG/NEMO binds to polyubiquitinated IRAK1 bringing together the IRAK1-MAP3K7/TAK1-TRAF6 complex and the NEMO-IKKA-IKKB complex. In turn, MAP3K7/TAK1 activates IKKs (CHUK/IKKA and IKBKB/IKKB) leading to NF-kappa-B nuclear translocation and activation. Alternatively, phosphorylates TIRAP to promote its ubiquitination and subsequent degradation. Phosphorylates the interferon regulatory factor 7 (IRF7) to induce its activation and translocation to the nucleus, resulting in transcriptional activation of type I IFN genes, which drive the cell in an antiviral state. When sumoylated, translocates to the nucleus and phosphorylates STAT3. This is Interleukin-1 receptor-associated kinase 1 (Irak1) from Mus musculus (Mouse).